The chain runs to 430 residues: Tol-Pal system protein TolB (430 aa).

The first 21 residues, 1 to 21, serve as a signal peptide directing secretion; that stretch reads MKQAFRLMVGLLVLWASVLHA.

It belongs to the TolB family. The Tol-Pal system is composed of five core proteins: the inner membrane proteins TolA, TolQ and TolR, the periplasmic protein TolB and the outer membrane protein Pal. They form a network linking the inner and outer membranes and the peptidoglycan layer.

The protein resides in the periplasm. Part of the Tol-Pal system, which plays a role in outer membrane invagination during cell division and is important for maintaining outer membrane integrity. TolB occupies a key intermediary position in the Tol-Pal system because it communicates directly with both membrane-embedded components, Pal in the outer membrane and TolA in the inner membrane. The chain is Tol-Pal system protein TolB from Edwardsiella ictaluri (strain 93-146).